Reading from the N-terminus, the 117-residue chain is Peptidyl-tRNA hydrolase (117 aa).

The protein belongs to the PTH2 family.

It localises to the cytoplasm. It catalyses the reaction an N-acyl-L-alpha-aminoacyl-tRNA + H2O = an N-acyl-L-amino acid + a tRNA + H(+). Functionally, the natural substrate for this enzyme may be peptidyl-tRNAs which drop off the ribosome during protein synthesis. This chain is Peptidyl-tRNA hydrolase, found in Metallosphaera sedula (strain ATCC 51363 / DSM 5348 / JCM 9185 / NBRC 15509 / TH2).